Consider the following 82-residue polypeptide: RNA-binding protein Hfq (82 aa).

A Sm domain is found at D11–V71.

Belongs to the Hfq family. In terms of assembly, homohexamer.

Its function is as follows. RNA chaperone that binds small regulatory RNA (sRNAs) and mRNAs to facilitate mRNA translational regulation in response to envelope stress, environmental stress and changes in metabolite concentrations. Also binds with high specificity to tRNAs. The chain is RNA-binding protein Hfq from Caulobacter sp. (strain K31).